Here is a 423-residue protein sequence, read N- to C-terminus: Histidine--tRNA ligase (423 aa).

This sequence belongs to the class-II aminoacyl-tRNA synthetase family. Homodimer.

It is found in the cytoplasm. It catalyses the reaction tRNA(His) + L-histidine + ATP = L-histidyl-tRNA(His) + AMP + diphosphate + H(+). This Geobacillus sp. (strain WCH70) protein is Histidine--tRNA ligase.